We begin with the raw amino-acid sequence, 438 residues long: Dihydrolipoyllysine-residue acetyltransferase component of pyruvate dehydrogenase complex (438 aa).

The 76-residue stretch at 1–76 (MFKVKFADIG…KVGDVVMEIE (76 aa)) folds into the Lipoyl-binding domain. The residue at position 42 (K42) is an N6-lipoyllysine. The 38-residue stretch at 132-169 (KATPLARKVAADLNIDLSLVTPTGPNQRILVADIKNHQ) folds into the Peripheral subunit-binding (PSBD) domain. Over residues 172–181 (STQLASQPIS) the composition is skewed to polar residues. The disordered stretch occupies residues 172-192 (STQLASQPISQPAPTPSPSAH). H411 is a catalytic residue.

This sequence belongs to the 2-oxoacid dehydrogenase family. In terms of assembly, forms a 24-polypeptide structural core with octahedral symmetry. The cofactor is (R)-lipoate.

The enzyme catalyses N(6)-[(R)-dihydrolipoyl]-L-lysyl-[protein] + acetyl-CoA = N(6)-[(R)-S(8)-acetyldihydrolipoyl]-L-lysyl-[protein] + CoA. Its function is as follows. The pyruvate dehydrogenase complex catalyzes the overall conversion of pyruvate to acetyl-CoA and CO(2). It contains multiple copies of three enzymatic components: pyruvate dehydrogenase (E1), dihydrolipoamide acetyltransferase (E2) and lipoamide dehydrogenase (E3). The chain is Dihydrolipoyllysine-residue acetyltransferase component of pyruvate dehydrogenase complex (pdhC) from Mycoplasma capricolum subsp. capricolum (strain California kid / ATCC 27343 / NCTC 10154).